The chain runs to 715 residues: Protein DENND6 homolog (715 aa).

A coiled-coil region spans residues 13 to 58 (MIFKEEEIKKQQILLEKEEKEKQEQQQKKLNKDNIFKLEEEGKKLE). Positions 96 to 273 (NSFCIINFDL…VKQHQLGGGS (178 aa)) constitute a uDENN domain. Disordered stretches follow at residues 269-296 (LGGG…SNTT) and 392-416 (SGTR…NNNN). In terms of domain architecture, cDENN spans 299–476 (SPSIWSEMKL…KDLLTRHVLD (178 aa)). Residues 399–416 (SNNNNNQDDSEYNNNNNN) show a composition bias toward low complexity. One can recognise a dDENN domain in the interval 478–600 (KEKILSEYKP…KQWLDDKRAQ (123 aa)).

It belongs to the DENND6 family.

The protein is Protein DENND6 homolog of Dictyostelium discoideum (Social amoeba).